Reading from the N-terminus, the 681-residue chain is DNA ligase (681 aa).

NAD(+) is bound by residues 34 to 38 (DEEYD), 83 to 84 (SL), and Glu-112. Lys-114 acts as the N6-AMP-lysine intermediate in catalysis. 4 residues coordinate NAD(+): Arg-135, Glu-169, Lys-285, and Lys-309. Zn(2+) contacts are provided by Cys-403, Cys-406, Cys-422, and Cys-427. Residues 584-673 (TTSNILDGLT…GVELKESWKK (90 aa)) form the BRCT domain.

This sequence belongs to the NAD-dependent DNA ligase family. LigA subfamily. Mg(2+) serves as cofactor. It depends on Mn(2+) as a cofactor.

It carries out the reaction NAD(+) + (deoxyribonucleotide)n-3'-hydroxyl + 5'-phospho-(deoxyribonucleotide)m = (deoxyribonucleotide)n+m + AMP + beta-nicotinamide D-nucleotide.. Functionally, DNA ligase that catalyzes the formation of phosphodiester linkages between 5'-phosphoryl and 3'-hydroxyl groups in double-stranded DNA using NAD as a coenzyme and as the energy source for the reaction. It is essential for DNA replication and repair of damaged DNA. In Fervidobacterium nodosum (strain ATCC 35602 / DSM 5306 / Rt17-B1), this protein is DNA ligase.